Consider the following 782-residue polypeptide: Translation initiation factor IF-2 (782 aa).

The disordered stretch occupies residues 47–196 (DNAIDGTNKK…TPPKPKELPE (150 aa)). The segment covering 53–65 (TNKKAEAPKKETT) has biased composition (basic and acidic residues). A compositionally biased stretch (polar residues) spans 66 to 81 (SNENGNSKGPNKPNMT). Over residues 82–93 (NSNEKSNKPNKP) the composition is skewed to low complexity. Polar residues predominate over residues 115-129 (KPANTSNQTQSSGNK). A compositionally biased stretch (low complexity) spans 133–170 (GGQKRNNNNNSNRPGGGNPNRPGGNNRPNRGGNFNNKG). The tr-type G domain maps to 283–452 (ERPPVVTIMG…LLVSEVEELK (170 aa)). The segment at 292–299 (GHVDHGKT) is G1. 292 to 299 (GHVDHGKT) is a binding site for GTP. The tract at residues 317 to 321 (GITQH) is G2. The tract at residues 338–341 (DTPG) is G3. GTP-binding positions include 338–342 (DTPGH) and 392–395 (NKID). Positions 392–395 (NKID) are G4. The G5 stretch occupies residues 428–430 (SAK).

It belongs to the TRAFAC class translation factor GTPase superfamily. Classic translation factor GTPase family. IF-2 subfamily.

Its subcellular location is the cytoplasm. In terms of biological role, one of the essential components for the initiation of protein synthesis. Protects formylmethionyl-tRNA from spontaneous hydrolysis and promotes its binding to the 30S ribosomal subunits. Also involved in the hydrolysis of GTP during the formation of the 70S ribosomal complex. The chain is Translation initiation factor IF-2 from Listeria innocua serovar 6a (strain ATCC BAA-680 / CLIP 11262).